The following is a 272-amino-acid chain: Orotidine 5'-phosphate decarboxylase (272 aa).

Lys95 serves as the catalytic Proton donor.

It belongs to the OMP decarboxylase family. Type 2 subfamily.

It carries out the reaction orotidine 5'-phosphate + H(+) = UMP + CO2. It functions in the pathway pyrimidine metabolism; UMP biosynthesis via de novo pathway; UMP from orotate: step 2/2. This Cupriavidus necator (strain ATCC 17699 / DSM 428 / KCTC 22496 / NCIMB 10442 / H16 / Stanier 337) (Ralstonia eutropha) protein is Orotidine 5'-phosphate decarboxylase.